The chain runs to 288 residues: NAD kinase (288 aa).

Catalysis depends on Asp-68, which acts as the Proton acceptor. NAD(+) is bound by residues 68-69 (DG), 142-143 (ND), Arg-153, Asp-172, and Gln-242.

The protein belongs to the NAD kinase family. The cofactor is a divalent metal cation.

It is found in the cytoplasm. The catalysed reaction is NAD(+) + ATP = ADP + NADP(+) + H(+). Involved in the regulation of the intracellular balance of NAD and NADP, and is a key enzyme in the biosynthesis of NADP. Catalyzes specifically the phosphorylation on 2'-hydroxyl of the adenosine moiety of NAD to yield NADP. This Desulforamulus reducens (strain ATCC BAA-1160 / DSM 100696 / MI-1) (Desulfotomaculum reducens) protein is NAD kinase.